The chain runs to 396 residues: Phosphoglycerate kinase (396 aa).

Residues 21 to 23 (DLN), Arg36, 59 to 62 (HFGR), Arg118, and Arg151 each bind substrate. ATP is bound by residues Lys201, Glu323, and 353 to 356 (GGDT).

The protein belongs to the phosphoglycerate kinase family. As to quaternary structure, monomer.

It is found in the cytoplasm. The catalysed reaction is (2R)-3-phosphoglycerate + ATP = (2R)-3-phospho-glyceroyl phosphate + ADP. It participates in carbohydrate degradation; glycolysis; pyruvate from D-glyceraldehyde 3-phosphate: step 2/5. This Brucella melitensis biotype 1 (strain ATCC 23456 / CCUG 17765 / NCTC 10094 / 16M) protein is Phosphoglycerate kinase.